The chain runs to 2210 residues: RNA-directed RNA polymerase L (2210 aa).

The tract at residues 26-285 is endonuclease; the sequence is KAIFLSQTKL…KCAIMSEEDS (260 aa). The Mn(2+) site is built by glutamate 51, aspartate 88, and glutamate 101. Lysine 114 is a catalytic residue. One can recognise a RdRp catalytic domain in the interval 1163–1359; the sequence is LDMKSVVRQG…FLSDKLNKFV (197 aa). Mg(2+) is bound at residue aspartate 1319.

This sequence belongs to the Bunyavirales RNA polymerase family. In terms of assembly, homomultimer; the oligomeric structure is essential for the polymerase activity. Interacts with nucleoprotein N. Interacts with protein Z; this interaction inhibits viral transcription and replication, Z partially blocks the product exit tunnel for the releasing nascent RNA product. It depends on Mn(2+) as a cofactor. Mg(2+) is required as a cofactor.

The protein resides in the virion. It localises to the host cytoplasm. It catalyses the reaction RNA(n) + a ribonucleoside 5'-triphosphate = RNA(n+1) + diphosphate. In terms of biological role, RNA-dependent RNA polymerase, which is responsible for the replication and transcription of the viral RNA genome using antigenomic RNA as an intermediate. During transcription, synthesizes subgenomic RNAs and assures their capping by a cap-snatching mechanism, which involves the endonuclease activity cleaving the host capped pre-mRNAs. These short capped RNAs are then used as primers for viral transcription. The 3'-end of subgenomic mRNAs molecules are heterogeneous and not polyadenylated. The replicase function is to direct synthesis of antigenomic and genomic RNA which are encapsidated and non capped. As a consequence of the use of the same enzyme for both transcription and replication, these mechanisms need to be well coordinated. These processes may be regulated by proteins N and Z in a dose-dependent manner. Z protein inhibits the viral polymerase L und thus the viral transcription and RNA synthesis. The chain is RNA-directed RNA polymerase L from Sigmodon alstoni (PIRV).